We begin with the raw amino-acid sequence, 347 residues long: NADH-ubiquinone oxidoreductase chain 2 (347 aa).

Helical transmembrane passes span 3 to 23 (PPIF…VMTS), 25 to 45 (HWML…PILM), 59 to 79 (YFLT…INLL), 96 to 116 (ILMT…FWVP), 122 to 142 (IPLS…LSVL), 149 to 169 (INPN…GWGG), 178 to 198 (ILAY…LYNP), 201 to 221 (MILN…LFML), 237 to 257 (MPLI…LPPL), 274 to 294 (EMII…YFYM), and 325 to 345 (FLPP…MISI).

It belongs to the complex I subunit 2 family. In terms of assembly, core subunit of respiratory chain NADH dehydrogenase (Complex I) which is composed of 45 different subunits. Interacts with TMEM242.

It localises to the mitochondrion inner membrane. It carries out the reaction a ubiquinone + NADH + 5 H(+)(in) = a ubiquinol + NAD(+) + 4 H(+)(out). Core subunit of the mitochondrial membrane respiratory chain NADH dehydrogenase (Complex I) which catalyzes electron transfer from NADH through the respiratory chain, using ubiquinone as an electron acceptor. Essential for the catalytic activity and assembly of complex I. This chain is NADH-ubiquinone oxidoreductase chain 2, found in Genetta servalina (Servaline genet).